The chain runs to 137 residues: Probable 4-amino-4-deoxy-L-arabinose-phosphoundecaprenol flippase subunit ArnF (137 aa).

Helical transmembrane passes span 43–63 (AIAVICASITAYALSMLFWLL), 74–94 (YSLLSISYALVYTLAATLPFF), and 98–118 (FTVSKTVGVTLIVAGVLTINL).

The protein belongs to the ArnF family. As to quaternary structure, heterodimer of ArnE and ArnF.

It localises to the cell inner membrane. It participates in bacterial outer membrane biogenesis; lipopolysaccharide biosynthesis. Its function is as follows. Translocates 4-amino-4-deoxy-L-arabinose-phosphoundecaprenol (alpha-L-Ara4N-phosphoundecaprenol) from the cytoplasmic to the periplasmic side of the inner membrane. The chain is Probable 4-amino-4-deoxy-L-arabinose-phosphoundecaprenol flippase subunit ArnF from Pseudomonas savastanoi pv. phaseolicola (strain 1448A / Race 6) (Pseudomonas syringae pv. phaseolicola (strain 1448A / Race 6)).